A 152-amino-acid polypeptide reads, in one-letter code: ESAT-6 secretion machinery protein EssA (152 aa).

Residues Met-1–Lys-114 lie on the Cytoplasmic side of the membrane. Residues Ile-115–Ser-135 form a helical membrane-spanning segment. At Ile-136–Ile-152 the chain is on the extracellular side.

This sequence belongs to the EssA family.

Its subcellular location is the cell membrane. In terms of biological role, component of the ESAT-6 secretion system (Ess). Required for the secretion of EsxA. This chain is ESAT-6 secretion machinery protein EssA, found in Staphylococcus aureus (strain MRSA252).